The chain runs to 527 residues: Probable glucomannan 4-beta-mannosyltransferase 9 (527 aa).

The chain crosses the membrane as a helical span at residues 37 to 59 (AMSVMLFVEKVYMSVVLVGVHLF). Residue aspartate 131 is part of the active site. Residues aspartate 190 and aspartate 192 each contribute to the substrate site. The active site involves aspartate 284. The next 4 helical transmembrane spans lie at 363-383 (IIGHIVTFVFYCLVVPATVLI), 399-419 (IVTILNSIGTPRSLHLLIFWV), 478-498 (ALELGFSAYLSFCGCYDIAYG), and 505-525 (FLFLQSITFFIIGVGYVGTIV).

Belongs to the glycosyltransferase 2 family. Plant cellulose synthase-like A subfamily.

The protein localises to the golgi apparatus membrane. It catalyses the reaction GDP-mannose + (glucomannan)n = GDP + (glucomannan)n+1.. In terms of biological role, probable mannan synthase which consists of a 4-beta-mannosyltransferase activity on mannan using GDP-mannose. The beta-1,4-mannan product is the backbone for galactomannan synthesis by galactomannan galactosyltransferase. Galactomannan is a noncellulosic polysaccharides of plant cell wall. The chain is Probable glucomannan 4-beta-mannosyltransferase 9 from Oryza sativa subsp. japonica (Rice).